A 146-amino-acid chain; its full sequence is Neuropeptide Y receptor type 2 (146 aa).

At 1 to 8 (KMGPVLCH) the chain is on the extracellular side. An intrachain disulfide couples C7 to C87. Residues 9-29 (LVPYAQGLAVQVSTITLTVIA) form a helical membrane-spanning segment. At 30-49 (LDRHRCIVYHLESKISKQIS) the chain is on the cytoplasmic side. A helical membrane pass occupies residues 50–70 (FLIIGLAWGVSALLASPLAIF). Residues 71 to 100 (REYSLIEIIPDFEIVACTEKWPGEEKGIYG) are Extracellular-facing. The chain crosses the membrane as a helical span at residues 101–121 (TVYSLLSLLILYVLPLGIISF). The Cytoplasmic segment spans residues 122-146 (SYARIWSKLKNHVSPGAAHDHYHQR).

It belongs to the G-protein coupled receptor 1 family.

It localises to the cell membrane. Functionally, receptor for neuropeptide Y and peptide YY. This Ovis aries (Sheep) protein is Neuropeptide Y receptor type 2 (NPY2R).